Reading from the N-terminus, the 152-residue chain is Large ribosomal subunit protein uL15 (152 aa).

Polar residues predominate over residues 1 to 13; sequence MLTLGNLSPQEGS. Residues 1 to 62 form a disordered region; sequence MLTLGNLSPQ…GGQMPLQRRL (62 aa). A compositionally biased stretch (basic residues) spans 31 to 40; the sequence is TAGRGHKGFK.

It belongs to the universal ribosomal protein uL15 family. In terms of assembly, part of the 50S ribosomal subunit.

In terms of biological role, binds to the 23S rRNA. The sequence is that of Large ribosomal subunit protein uL15 from Desulfotalea psychrophila (strain LSv54 / DSM 12343).